The sequence spans 628 residues: 1-deoxy-D-xylulose-5-phosphate synthase (628 aa).

Thiamine diphosphate-binding positions include H77 and 118–120 (GHS). D150 lines the Mg(2+) pocket. Thiamine diphosphate contacts are provided by residues 151-152 (GA), N180, Y288, and E369. N180 is a binding site for Mg(2+).

This sequence belongs to the transketolase family. DXPS subfamily. As to quaternary structure, homodimer. Mg(2+) is required as a cofactor. Requires thiamine diphosphate as cofactor.

The catalysed reaction is D-glyceraldehyde 3-phosphate + pyruvate + H(+) = 1-deoxy-D-xylulose 5-phosphate + CO2. The protein operates within metabolic intermediate biosynthesis; 1-deoxy-D-xylulose 5-phosphate biosynthesis; 1-deoxy-D-xylulose 5-phosphate from D-glyceraldehyde 3-phosphate and pyruvate: step 1/1. Its function is as follows. Catalyzes the acyloin condensation reaction between C atoms 2 and 3 of pyruvate and glyceraldehyde 3-phosphate to yield 1-deoxy-D-xylulose-5-phosphate (DXP). This Aquifex aeolicus (strain VF5) protein is 1-deoxy-D-xylulose-5-phosphate synthase.